We begin with the raw amino-acid sequence, 144 residues long: Prefoldin subunit alpha (144 aa).

It belongs to the prefoldin alpha subunit family. In terms of assembly, heterohexamer of two alpha and four beta subunits.

The protein localises to the cytoplasm. Its function is as follows. Molecular chaperone capable of stabilizing a range of proteins. Seems to fulfill an ATP-independent, HSP70-like function in archaeal de novo protein folding. This is Prefoldin subunit alpha from Methanococcus aeolicus (strain ATCC BAA-1280 / DSM 17508 / OCM 812 / Nankai-3).